A 229-amino-acid polypeptide reads, in one-letter code: Matrix protein (229 aa).

The dynamin binding signature appears at 2–4; it reads KSI. The interval 11–36 is disordered; the sequence is AKKEKKREKKSNHGSHSMEWESPPSY. A compositionally biased stretch (basic residues) spans 13–23; it reads KEKKREKKSNH. Residues 33–36 carry the PPXY motif motif; the sequence is PPSY. The PTAP/PSAP motif signature appears at 42 to 45; sequence PSAP.

This sequence belongs to the vesiculoviruses matrix protein family. In terms of assembly, homomultimer. Interacts with viral nucleocapsid; this interaction contributes to the virion assembly. Interacts with the viral envelope glycoprotein; this interaction contributes to the virion assembly. Interacts with host RAE1-NUP98 complex. Interacts with host NEDD4 and TSG101. Interacts with host dynamin. Interacts with host NDUFAF4; the interaction inhibits viral propagation and is independent of interferon activation. Interacts with host GTF2H5; the interaction may inhibit host transcription. In terms of processing, phosphorylated by host.

It is found in the virion. The protein resides in the host endomembrane system. It localises to the host nucleus membrane. Its subcellular location is the host nucleus. The protein localises to the host cytoplasm. Forms a double layer around the helical nucleocapsid, the inner matrix layer binding to the N helix and the outer matrix layer binding to the envelope glycoprotein. Plays a major role in assembly and budding of virion, by recruiting cellular partners of the ESCRT complexes that play a key role in releasing the budding particle from the host membrane. Condensates the ribonucleocapsid core during virus assembly. Inhibits the host mRNA nuclear export thereby inducing the shut off of cellular transcription and preventing the interferon signaling and the establishment of antiviral state in infected cells. This shutoff presumably inhibits interferon signaling and thus establishment of antiviral state in virus infected cells. Induces cell-rounding, cytoskeleton disorganization and apoptosis in infected cell. Inhibits host transcription, possibly through interaction with host DNA repair factor IIH/TFIIH GTF2H5 subunit. In Piry virus (PIRYV), this protein is Matrix protein (M).